Here is a 219-residue protein sequence, read N- to C-terminus: Putative GEM-like protein 8 (219 aa).

In terms of domain architecture, GRAM spans 96–174 (KIYKRLFKVS…CKINGVNQSQ (79 aa)).

The protein belongs to the GEM family.

The protein is Putative GEM-like protein 8 of Arabidopsis thaliana (Mouse-ear cress).